The primary structure comprises 563 residues: Sulfite reductase [NADPH] hemoprotein beta-component (563 aa).

[4Fe-4S] cluster is bound by residues C426, C432, C472, and C476. C476 provides a ligand contact to siroheme.

This sequence belongs to the nitrite and sulfite reductase 4Fe-4S domain family. Alpha(8)-beta(8). The alpha component is a flavoprotein, the beta component is a hemoprotein. The cofactor is siroheme. [4Fe-4S] cluster serves as cofactor.

The catalysed reaction is hydrogen sulfide + 3 NADP(+) + 3 H2O = sulfite + 3 NADPH + 4 H(+). It participates in sulfur metabolism; hydrogen sulfide biosynthesis; hydrogen sulfide from sulfite (NADPH route): step 1/1. In terms of biological role, component of the sulfite reductase complex that catalyzes the 6-electron reduction of sulfite to sulfide. This is one of several activities required for the biosynthesis of L-cysteine from sulfate. This Photobacterium profundum (strain SS9) protein is Sulfite reductase [NADPH] hemoprotein beta-component.